Consider the following 327-residue polypeptide: Embigin (327 aa).

A signal peptide spans 1–32 (MRALPGLLEARARTPRLLLLQCLLAAARPSSA). Topologically, residues 33 to 260 (DGSAPDSPFT…ELVVLSYLVP (228 aa)) are extracellular. N-linked (GlcNAc...) asparagine glycosylation is found at Asn54, Asn61, Asn75, Asn85, Asn100, Asn189, Asn196, Asn213, and Asn218. 2 consecutive Ig-like V-type domains span residues 71–158 (PVEK…NFKV) and 159–253 (PELH…IELV). 2 cysteine pairs are disulfide-bonded: Cys88-Cys142 and Cys180-Cys237. Residues 261–281 (LKPFLVIVAEVILLVATILLC) traverse the membrane as a helical segment. Over 282 to 327 (EKYTQKKKKHSDEGKEFEQIEQLKSDDSNGIENNVPRHRKNESLGQ) the chain is Cytoplasmic. Residues 287-327 (KKKKHSDEGKEFEQIEQLKSDDSNGIENNVPRHRKNESLGQ) form a disordered region. A compositionally biased stretch (basic and acidic residues) spans 291 to 308 (HSDEGKEFEQIEQLKSDD). Ser309 is modified (phosphoserine).

As to quaternary structure, interacts with SLC16A1, SLC16A6 and SLC16A7.

The protein resides in the cell membrane. It is found in the synapse. In terms of biological role, plays a role in the outgrowth of motoneurons and in the formation of neuromuscular junctions. Following muscle denervation, promotes nerve terminal sprouting and the formation of additional acetylcholine receptor clusters at synaptic sites without affecting terminal Schwann cell number or morphology. Delays the retraction of terminal sprouts following re-innervation of denervated endplates. May play a role in targeting the monocarboxylate transporters SLC16A1, SLC16A6 and SLC16A7 to the cell membrane. This is Embigin (EMB) from Homo sapiens (Human).